The sequence spans 285 residues: Golgi phosphoprotein 3-like (285 aa).

A disordered region spans residues 1 to 43 (MTTLTHRTRRTEVSKSSEKKIESEEDTNQERSPDNEDPGDSKD). Residues 10–43 (RTEVSKSSEKKIESEEDTNQERSPDNEDPGDSKD) show a composition bias toward basic and acidic residues. A 1,2-diacyl-sn-glycero-3-phospho-(1D-myo-inositol 4-phosphate)-binding residues include W67 and R76. S112 is subject to Phosphoserine. Residues R157 and R160 each contribute to the a 1,2-diacyl-sn-glycero-3-phospho-(1D-myo-inositol 4-phosphate) site. The interval 176-187 (EKQNFLLFDMTT) is beta-hairpin required for oligomerization.

It belongs to the GOLPH3/VPS74 family. Homooligomer. Does not interact MYO18; differs from GOLPH3 by its inability to interact with MYO18. May interact with ARF1. Expressed in a subset of tissues tested with higher expression in salivary gland, small intestine and skin (at protein level).

It is found in the golgi apparatus. It localises to the golgi stack membrane. The protein resides in the trans-Golgi network membrane. In terms of biological role, phosphatidylinositol-4-phosphate-binding protein that may antagonize the action of GOLPH3 which is required for the process of vesicle budding at the Golgi and anterograde transport to the plasma membrane. This is Golgi phosphoprotein 3-like (Golph3l) from Mus musculus (Mouse).